Consider the following 616-residue polypeptide: Dihydroxy-acid dehydratase (616 aa).

D81 is a binding site for Mg(2+). C122 is a [2Fe-2S] cluster binding site. Residues D123 and K124 each coordinate Mg(2+). K124 is modified (N6-carboxylysine). C195 is a binding site for [2Fe-2S] cluster. A Mg(2+)-binding site is contributed by E491. Residue S517 is the Proton acceptor of the active site.

The protein belongs to the IlvD/Edd family. As to quaternary structure, homodimer. Requires [2Fe-2S] cluster as cofactor. It depends on Mg(2+) as a cofactor.

The catalysed reaction is (2R)-2,3-dihydroxy-3-methylbutanoate = 3-methyl-2-oxobutanoate + H2O. It catalyses the reaction (2R,3R)-2,3-dihydroxy-3-methylpentanoate = (S)-3-methyl-2-oxopentanoate + H2O. It participates in amino-acid biosynthesis; L-isoleucine biosynthesis; L-isoleucine from 2-oxobutanoate: step 3/4. It functions in the pathway amino-acid biosynthesis; L-valine biosynthesis; L-valine from pyruvate: step 3/4. Functions in the biosynthesis of branched-chain amino acids. Catalyzes the dehydration of (2R,3R)-2,3-dihydroxy-3-methylpentanoate (2,3-dihydroxy-3-methylvalerate) into 2-oxo-3-methylpentanoate (2-oxo-3-methylvalerate) and of (2R)-2,3-dihydroxy-3-methylbutanoate (2,3-dihydroxyisovalerate) into 2-oxo-3-methylbutanoate (2-oxoisovalerate), the penultimate precursor to L-isoleucine and L-valine, respectively. This is Dihydroxy-acid dehydratase from Erwinia tasmaniensis (strain DSM 17950 / CFBP 7177 / CIP 109463 / NCPPB 4357 / Et1/99).